The following is a 305-amino-acid chain: Dihydroorotate dehydrogenase B (NAD(+)), catalytic subunit (305 aa).

FMN is bound by residues Ser23 and 47 to 48; that span reads KG. Residues Lys47 and 71–75 contribute to the substrate site; that span reads NAIGL. FMN contacts are provided by Asn101 and Asn129. A substrate-binding site is contributed by Asn129. Cys132 (nucleophile) is an active-site residue. Lys167 and Ile193 together coordinate FMN. 194-195 contacts substrate; that stretch reads NT. Residues Gly219, 245–246, and 267–268 each bind FMN; these read GG and GT.

The protein belongs to the dihydroorotate dehydrogenase family. Type 1 subfamily. In terms of assembly, heterotetramer of 2 PyrK and 2 PyrD type B subunits. Requires FMN as cofactor.

Its subcellular location is the cytoplasm. It carries out the reaction (S)-dihydroorotate + NAD(+) = orotate + NADH + H(+). It functions in the pathway pyrimidine metabolism; UMP biosynthesis via de novo pathway; orotate from (S)-dihydroorotate (NAD(+) route): step 1/1. Its function is as follows. Catalyzes the conversion of dihydroorotate to orotate with NAD(+) as electron acceptor. This chain is Dihydroorotate dehydrogenase B (NAD(+)), catalytic subunit (pyrD), found in Geotalea uraniireducens (strain Rf4) (Geobacter uraniireducens).